The chain runs to 227 residues: UPF0173 metal-dependent hydrolase BPUM_2573 (227 aa).

Belongs to the UPF0173 family.

The sequence is that of UPF0173 metal-dependent hydrolase BPUM_2573 from Bacillus pumilus (strain SAFR-032).